The sequence spans 254 residues: Countin-2 (254 aa).

Residues 1 to 19 (MMIKYITIAILFIASLVKA) form the signal peptide. A Saposin B-type domain is found at 22–107 (QFSLCPTCVD…EELTVCPKNQ (86 aa)). 3 cysteine pairs are disulfide-bonded: Cys26-Cys103, Cys29-Cys97, and Cys56-Cys68. 2 N-linked (GlcNAc...) asparagine glycosylation sites follow: Asn110 and Asn219. A disordered region spans residues 231-254 (QMTGTGSGSGSGSGSSSGAAYLRY). Positions 233 to 245 (TGTGSGSGSGSGS) are enriched in gly residues.

This sequence belongs to the countin family.

The protein localises to the secreted. Its function is as follows. Cell-counting factor that limits the minimum size of the multicellular structure. May up-regulate the expression of both gp24 and gp80, which mediate cell adhesion. The chain is Countin-2 (ctnB) from Dictyostelium discoideum (Social amoeba).